Reading from the N-terminus, the 297-residue chain is Ribosomal protein L11 methyltransferase (297 aa).

The S-adenosyl-L-methionine site is built by T152, G173, D195, and N234.

It belongs to the methyltransferase superfamily. PrmA family.

The protein resides in the cytoplasm. It carries out the reaction L-lysyl-[protein] + 3 S-adenosyl-L-methionine = N(6),N(6),N(6)-trimethyl-L-lysyl-[protein] + 3 S-adenosyl-L-homocysteine + 3 H(+). Its function is as follows. Methylates ribosomal protein L11. The polypeptide is Ribosomal protein L11 methyltransferase (Cupriavidus taiwanensis (strain DSM 17343 / BCRC 17206 / CCUG 44338 / CIP 107171 / LMG 19424 / R1) (Ralstonia taiwanensis (strain LMG 19424))).